The sequence spans 173 residues: HTH-type transcriptional regulator IscR (173 aa).

The HTH rrf2-type domain occupies 2 to 131; sequence RLTSKGRYAV…NNITLGELMM (130 aa). A DNA-binding region (H-T-H motif) is located at residues 28 to 51; that stretch reads LADISERQGISLSYLEQLFSKLRK. [2Fe-2S] cluster is bound by residues C92, C98, and C104.

The cofactor is [2Fe-2S] cluster.

Its function is as follows. Regulates the transcription of several operons and genes involved in the biogenesis of Fe-S clusters and Fe-S-containing proteins. In Vibrio cholerae serotype O1 (strain ATCC 39315 / El Tor Inaba N16961), this protein is HTH-type transcriptional regulator IscR.